We begin with the raw amino-acid sequence, 392 residues long: Cell division protein FtsZ (392 aa).

Residues 24–28 (GGGCN), 111–113 (GTG), E142, R145, and D189 each bind GTP.

Belongs to the FtsZ family. In terms of assembly, homodimer. Polymerizes to form a dynamic ring structure in a strictly GTP-dependent manner. Interacts directly with several other division proteins.

It localises to the cytoplasm. Functionally, essential cell division protein that forms a contractile ring structure (Z ring) at the future cell division site. The regulation of the ring assembly controls the timing and the location of cell division. One of the functions of the FtsZ ring is to recruit other cell division proteins to the septum to produce a new cell wall between the dividing cells. Binds GTP and shows GTPase activity. The polypeptide is Cell division protein FtsZ (Neisseria meningitidis serogroup A / serotype 4A (strain DSM 15465 / Z2491)).